We begin with the raw amino-acid sequence, 82 residues long: Putative membrane protein insertion efficiency factor (82 aa).

This sequence belongs to the UPF0161 family.

Its subcellular location is the cell inner membrane. In terms of biological role, could be involved in insertion of integral membrane proteins into the membrane. This chain is Putative membrane protein insertion efficiency factor, found in Synechococcus elongatus (strain ATCC 33912 / PCC 7942 / FACHB-805) (Anacystis nidulans R2).